A 56-amino-acid polypeptide reads, in one-letter code: Large ribosomal subunit protein bL33 (56 aa).

It belongs to the bacterial ribosomal protein bL33 family.

This Anaplasma marginale (strain Florida) protein is Large ribosomal subunit protein bL33.